We begin with the raw amino-acid sequence, 379 residues long: Dual-specificity RNA methyltransferase RlmN (379 aa).

The active-site Proton acceptor is the E95. A Radical SAM core domain is found at 101–345 (EETRGTLCVS…TTVRKTRGDD (245 aa)). Residues C108 and C350 are joined by a disulfide bond. Positions 115, 119, and 122 each coordinate [4Fe-4S] cluster. Residues 176-177 (GE), S208, 230-232 (SLH), and N307 contribute to the S-adenosyl-L-methionine site. C350 serves as the catalytic S-methylcysteine intermediate.

This sequence belongs to the radical SAM superfamily. RlmN family. The cofactor is [4Fe-4S] cluster.

It localises to the cytoplasm. The catalysed reaction is adenosine(2503) in 23S rRNA + 2 reduced [2Fe-2S]-[ferredoxin] + 2 S-adenosyl-L-methionine = 2-methyladenosine(2503) in 23S rRNA + 5'-deoxyadenosine + L-methionine + 2 oxidized [2Fe-2S]-[ferredoxin] + S-adenosyl-L-homocysteine. It carries out the reaction adenosine(37) in tRNA + 2 reduced [2Fe-2S]-[ferredoxin] + 2 S-adenosyl-L-methionine = 2-methyladenosine(37) in tRNA + 5'-deoxyadenosine + L-methionine + 2 oxidized [2Fe-2S]-[ferredoxin] + S-adenosyl-L-homocysteine. Functionally, specifically methylates position 2 of adenine 2503 in 23S rRNA and position 2 of adenine 37 in tRNAs. m2A2503 modification seems to play a crucial role in the proofreading step occurring at the peptidyl transferase center and thus would serve to optimize ribosomal fidelity. This Burkholderia cenocepacia (strain ATCC BAA-245 / DSM 16553 / LMG 16656 / NCTC 13227 / J2315 / CF5610) (Burkholderia cepacia (strain J2315)) protein is Dual-specificity RNA methyltransferase RlmN.